The primary structure comprises 754 residues: Exocyst complex component EXO84A (754 aa).

Disordered regions lie at residues 514 to 540 and 734 to 754; these read RILP…EQRE and GHGE…YTSN. The segment covering 518-527 has biased composition (polar residues); the sequence is QGTSQSTPRR. Residues 528-540 show a composition bias toward basic and acidic residues; that stretch reads GSSDRQNRPEQRE. A compositionally biased stretch (polar residues) spans 741 to 754; that stretch reads TSPSVSSAKSYTSN.

It belongs to the EXO84 family. In terms of assembly, the exocyst complex is composed of SEC3, SEC5, SEC6, SEC8, SEC10, EXO70A1 and EXO84.

In terms of biological role, component of the exocyst complex involved in the docking of exocytic vesicles with fusion sites on the plasma membrane during regulated or polarized secretion. Involved in polarized cell growth and organ morphogenesis. During cytokinesis, involved in cell plate initiation, cell plate maturation and formation of new primary cell wall. The chain is Exocyst complex component EXO84A (EXO84A) from Arabidopsis thaliana (Mouse-ear cress).